The primary structure comprises 704 residues: D-(-)-3-hydroxybutyrate oligomer hydrolase (704 aa).

The first 31 residues, 1–31 (MTTTNRNNLKLTALTAAVLTLSACGGSDAVA), serve as a signal peptide directing secretion. Ser309 (charge relay system) is an active-site residue.

This sequence belongs to the D-(-)-3-hydroxybutyrate oligomer hydrolase family.

It localises to the secreted. The enzyme catalyses (3R)-hydroxybutanoate dimer + H2O = 2 (R)-3-hydroxybutanoate + H(+). The protein operates within lipid metabolism; butanoate metabolism. Participates in the degradation of poly-3-hydroxybutyrate (PHB). It works downstream of poly(3-hydroxybutyrate) depolymerase, hydrolyzing D(-)-3-hydroxybutyrate oligomers of various length (3HB-oligomers) into 3HB-monomers. The chain is D-(-)-3-hydroxybutyrate oligomer hydrolase from Albidiferax ferrireducens (strain ATCC BAA-621 / DSM 15236 / T118) (Rhodoferax ferrireducens).